A 172-amino-acid polypeptide reads, in one-letter code: MTQTIFMVGARAAGKTTIGQALANALSYPFVDTDLYMLETTNLTVADVVVTEGWEGFRRRESEALRTVTKPGIVVATGGGMVLSEENRDFMRANGTVFYLSAPAEVLAARLEAYPDAGQRPTLTGRPIVEEVSEVLAARENLYRSAAHHVLDASVAPEAVLVQALELLKKQA.

9–16 is an ATP binding site; sequence GARAAGKT.

Belongs to the shikimate kinase family.

It localises to the cytoplasm. The catalysed reaction is shikimate + ATP = 3-phosphoshikimate + ADP + H(+). The protein operates within metabolic intermediate biosynthesis; chorismate biosynthesis; chorismate from D-erythrose 4-phosphate and phosphoenolpyruvate: step 5/7. This chain is Shikimate kinase 2, found in Syntrophotalea carbinolica (strain DSM 2380 / NBRC 103641 / GraBd1) (Pelobacter carbinolicus).